The primary structure comprises 602 residues: Elongation factor 4 (602 aa).

In terms of domain architecture, tr-type G spans 6–188 (RNVRNFSIIA…RITEVVPEPA (183 aa)). Residues 18–23 (DHGKST) and 135–138 (NKID) each bind GTP.

Belongs to the TRAFAC class translation factor GTPase superfamily. Classic translation factor GTPase family. LepA subfamily.

The protein localises to the cell membrane. The enzyme catalyses GTP + H2O = GDP + phosphate + H(+). Functionally, required for accurate and efficient protein synthesis under certain stress conditions. May act as a fidelity factor of the translation reaction, by catalyzing a one-codon backward translocation of tRNAs on improperly translocated ribosomes. Back-translocation proceeds from a post-translocation (POST) complex to a pre-translocation (PRE) complex, thus giving elongation factor G a second chance to translocate the tRNAs correctly. Binds to ribosomes in a GTP-dependent manner. The chain is Elongation factor 4 from Oceanobacillus iheyensis (strain DSM 14371 / CIP 107618 / JCM 11309 / KCTC 3954 / HTE831).